Consider the following 275-residue polypeptide: Undecaprenyl-diphosphatase (275 aa).

The next 8 membrane-spanning stretches (helical) occupy residues 2–22, 43–63, 83–103, 111–131, 147–167, 186–206, 221–241, and 255–275; these read LDIF…FLPI, FTDM…VVLY, WVLW…GLPL, LMNW…FIVI, TLPY…LIPG, YVAT…ASLL, LQGA…YLSI, and AFGW…TLIH.

The protein belongs to the UppP family.

It localises to the cell membrane. The enzyme catalyses di-trans,octa-cis-undecaprenyl diphosphate + H2O = di-trans,octa-cis-undecaprenyl phosphate + phosphate + H(+). Functionally, catalyzes the dephosphorylation of undecaprenyl diphosphate (UPP). Confers resistance to bacitracin. This Lactiplantibacillus plantarum (strain ATCC BAA-793 / NCIMB 8826 / WCFS1) (Lactobacillus plantarum) protein is Undecaprenyl-diphosphatase.